Reading from the N-terminus, the 266-residue chain is OCIA domain-containing protein 1 (266 aa).

The OCIA domain maps to methionine 1–glutamate 114. Disordered regions lie at residues glutamate 127–lysine 213 and lysine 225–glutamate 266. Residues proline 135–valine 155 show a composition bias toward polar residues. Residues serine 156 to tyrosine 178 are compositionally biased toward low complexity. Positions glutamate 179–serine 188 are enriched in polar residues. The segment covering glutamine 250–glutamate 266 has biased composition (basic and acidic residues).

Belongs to the OCIAD1 family.

The protein resides in the endosome. This is OCIA domain-containing protein 1 (ociad1) from Danio rerio (Zebrafish).